Here is a 402-residue protein sequence, read N- to C-terminus: 3-isopropylmalate dehydratase large subunit 2 (402 aa).

Positions 280, 341, and 344 each coordinate [4Fe-4S] cluster.

The protein belongs to the aconitase/IPM isomerase family. LeuC type 2 subfamily. In terms of assembly, heterodimer of LeuC and LeuD. [4Fe-4S] cluster is required as a cofactor.

The catalysed reaction is (2R,3S)-3-isopropylmalate = (2S)-2-isopropylmalate. It functions in the pathway amino-acid biosynthesis; L-leucine biosynthesis; L-leucine from 3-methyl-2-oxobutanoate: step 2/4. Its function is as follows. Catalyzes the isomerization between 2-isopropylmalate and 3-isopropylmalate, via the formation of 2-isopropylmaleate. This Methanopyrus kandleri (strain AV19 / DSM 6324 / JCM 9639 / NBRC 100938) protein is 3-isopropylmalate dehydratase large subunit 2.